The sequence spans 280 residues: Coiled-coil domain-containing protein 106 (280 aa).

The stretch at 63 to 101 (TQLHMALERNSWLQKRIEDLEEERDFLRCQLDKFISSAR) forms a coiled coil. A compositionally biased stretch (basic and acidic residues) spans 103–121 (EAEDHCRMKPGPRRMEGDS). A disordered region spans residues 103-176 (EAEDHCRMKP…KPKARERQRV (74 aa)). Serine 130 carries the post-translational modification Phosphoserine. Over residues 133 to 146 (ESAASSLSGASEEG) the composition is skewed to low complexity. Residues 151-164 (RRRQKQKGGASRRR) carry the Bipartite nuclear localization signal motif. Positions 152–168 (RRQKQKGGASRRRFGKP) are enriched in basic residues.

As to quaternary structure, interacts with p53/TP53.

The protein localises to the nucleus. Promotes the degradation of p53/TP53 protein and inhibits its transactivity. The sequence is that of Coiled-coil domain-containing protein 106 (CCDC106) from Homo sapiens (Human).